The sequence spans 802 residues: Endoplasmin (802 aa).

Positions 1–21 (MRVLWVLGLCCVLLTFGFVRA) are cleaved as a signal peptide. Positions 42–44 (SRT) match the SRT pseudosubstrate motif motif. N-linked (GlcNAc...) asparagine glycosylation occurs at Asn62. Ser64 carries the phosphoserine modification. Asn107 is a glycosylation site (N-linked (GlcNAc...) asparagine). Asn107, Asp149, and Asn162 together coordinate ATP. N6-(2-hydroxyisobutyryl)lysine is present on Lys168. At Ser172 the chain carries Phosphoserine. Phe199 lines the ATP pocket. Asn217 carries an N-linked (GlcNAc...) asparagine glycan. Over residues 290 to 317 (EEPLEEDEAAKEEKEESDDEAAVEEEEE) the composition is skewed to acidic residues. Residues 290–323 (EEPLEEDEAAKEEKEESDDEAAVEEEEEEKKPKT) form a disordered region. A phosphoserine mark is found at Ser306 and Ser403. At Lys404 the chain carries N6-succinyllysine. A glycan (N-linked (GlcNAc...) asparagine) is linked at Asn445. Ser447 is modified (phosphoserine). Residue Lys479 is modified to N6-acetyllysine. N-linked (GlcNAc...) asparagine glycans are attached at residues Asn481 and Asn502. At Lys633 the chain carries N6-succinyllysine. Residues 749–802 (IDPEAQVEEEPEEEPEDTSEDAEDSEQDEGEEMDAGTEEEEEETEKESTEKDEL) form a disordered region. Acidic residues predominate over residues 753–793 (AQVEEEPEEEPEDTSEDAEDSEQDEGEEMDAGTEEEEEETE). Position 785 is a phosphothreonine (Thr785). The Prevents secretion from ER signature appears at 799-802 (KDEL).

The protein belongs to the heat shock protein 90 family. In terms of assembly, homodimer; disulfide-linked. Component of an EIF2 complex at least composed of CELF1/CUGBP1, CALR, CALR3, EIF2S1, EIF2S2, HSP90B1 and HSPA5. Part of a large chaperone multiprotein complex comprising DNAJB11, HSP90B1, HSPA5, HYOU, PDIA2, PDIA4, PDIA6, PPIB, SDF2L1, UGGT1 and very small amounts of ERP29, but not, or at very low levels, CALR nor CANX. Hyperglycosylated form interacts with OS9; promoting its degradation by the endoplasmic reticulum associated degradation (ERAD). Interacts with AIMP1; regulates its retention in the endoplasmic reticulum. Interacts with CNPY3; this interaction is disrupted in the presence of ATP. Interacts with TLR4, TLR9 and TLR11, but not with TLR3. Interacts with MZB1 in a calcium-dependent manner. Interacts with METTL23. Interacts with IL1B; the interaction facilitates cargo translocation into the ERGIC. Interacts with EIF2AK3. Phosphorylated by CK2. In terms of processing, N-glycosylated cotranslationally at Asn-217 by STT3A-containing OST-A complex: this glycosylation is constitutive. In response to various stress, 5 additional facultative sites (Asn-62, Asn-107, Asn-445, Asn-481 and Asn-502) can be glycosylated post-translationally by STT3B-containing OST-B complex, leading to a hyperglycosylated form that is degraded by the ER-associated degradation (ERAD) pathway. In normal conditions, the OST-A complex together with CCDC134 prevent glycosylation at facultative sites during protein folding, thereby preventing hyperglycosylation. Mechanistically, nascent HSP90B1 is tethered during translation to a specialized CCDC134-containing translocon that forms a microenvironment for its folding, in which STT3A associates with the SRT pseudosubstrate motif, and prevents access to facultative glycosylation sites until folding is completed, rendering its facultative sites inaccessible to the OST-B complex.

It is found in the endoplasmic reticulum lumen. Its subcellular location is the sarcoplasmic reticulum lumen. The protein resides in the melanosome. The catalysed reaction is ATP + H2O = ADP + phosphate + H(+). ATP-dependent chaperone involved in the processing of proteins in the endoplasmic reticulum, regulating their transport. Together with MESD, acts as a modulator of the Wnt pathway by promoting the folding of LRP6, a coreceptor of the canonical Wnt pathway. When associated with CNPY3, required for proper folding of Toll-like receptors. Promotes folding and trafficking of TLR4 to the cell surface. May participate in the unfolding of cytosolic leaderless cargos (lacking the secretion signal sequence) such as the interleukin 1/IL-1 to facilitate their translocation into the ERGIC (endoplasmic reticulum-Golgi intermediate compartment) and secretion; the translocation process is mediated by the cargo receptor TMED10. In Mus musculus (Mouse), this protein is Endoplasmin (Hsp90b1).